The primary structure comprises 63 residues: Conotoxin Vi5.1b (63 aa).

An N-terminal signal peptide occupies residues 1–22 (MLCVPVFIILFIIIPFAPTSES). Residues 23-50 (QPKTKEEVAKASVHDNAERTLQRLWNQS) constitute a propeptide that is removed on maturation. P62 bears the Proline amide mark.

The protein belongs to the conotoxin T superfamily. In terms of processing, contains 2 disulfide bonds that can be either 'C1-C3, C2-C4' or 'C1-C4, C2-C3', since these disulfide connectivities have been observed for conotoxins with cysteine framework V (for examples, see AC P0DQQ7 and AC P81755). In terms of tissue distribution, expressed by the venom duct.

The protein resides in the secreted. The chain is Conotoxin Vi5.1b from Conus virgo (Virgin cone).